The chain runs to 100 residues: Large ribosomal subunit protein eL14 (100 aa).

It belongs to the eukaryotic ribosomal protein eL14 family.

The polypeptide is Large ribosomal subunit protein eL14 (Aeropyrum pernix (strain ATCC 700893 / DSM 11879 / JCM 9820 / NBRC 100138 / K1)).